Here is a 695-residue protein sequence, read N- to C-terminus: MNQSGTNQSSLSDSNQAGINQPSTNSLGMNQMDMNQGSASLYEMNQVDMKQPSMSQAGMRQSGTNLPDINQPDMKQPDTWQLGRSQPGMLQQELSQLVLSKAGISQPDPSQPGPSQSGPSQSRMRQIGTNQSGMSQPVMQQLDSQSGGSQPSMRQVGTSQLGTSQIGMSQPGTWQTGLSQPVLRQPNMSPPGMWQPGVQQPGISQQVPSHPDMSQPGMSQQVPSQPGIRQPDTSQSCKNQTDMSQPDANQSSLSDSNQTGIIQPSPSLLGMNQMDMNQWSASLYEMNQVDMKQPSMSQAGMRQSGTNLPDINQPGMKQPGTWQLGRSQPGMWPQSLSELVLSEASISQPGPPQRAPSQSGPRQSSTSQAGTNQSGISQPVMWQLDMRQSGGSQPSMRQVGTSQSGTSQIGMSQPGTWQTGLSQPVPRQPNKSPPGMWQRGMWQPGMSQQVPSQLGMRQPGTSQSSKNQTGMSHPGRGQPGIWEPGPSQPGLSQQDLNQLVLSQPGLSQPGRSQPSVSQMGMRQTSMDYFQIRHAEAGDCPEILRLIKELAACENMLDAMELTAADLLRDGFGDNPLFYCLIAEVNDQQKPSGKLTVGFAMYYFTYDSWTGKVLYLEDFYVTQAYQGLGIGAEMLKRLSQIAITTQCNCMHFLVVIWNQASINYYTSRGALDLSSEEGWHLFRFNREELLDMAWEE.

3 stretches are compositionally biased toward polar residues: residues 1-39 (MNQSGTNQSSLSDSNQAGINQPSTNSLGMNQMDMNQGSA), 52-68 (PSMSQAGMRQSGTNLPD), and 78-98 (DTWQLGRSQPGMLQQELSQLV). Disordered regions lie at residues 1–274 (MNQS…MNQM), 290–332 (DMKQ…PGMW), 344–375 (ASISQPGPPQRAPSQSGPRQSSTSQAGTNQSG), and 387–493 (RQSG…GLSQ). Residues 105–122 (SQPDPSQPGPSQSGPSQS) show a composition bias toward low complexity. Polar residues-rich tracts occupy residues 123 to 179 (RMRQ…TGLS), 197 to 208 (GVQQPGISQQVP), 231 to 266 (PDTSQSCKNQTDMSQPDANQSSLSDSNQTGIIQPSP), 294 to 310 (PSMSQAGMRQSGTNLPD), 355 to 375 (APSQSGPRQSSTSQAGTNQSG), 389 to 422 (SGGSQPSMRQVGTSQSGTSQIGMSQPGTWQTGLS), and 459 to 471 (PGTSQSSKNQTGM). Positions 529–695 (FQIRHAEAGD…EELLDMAWEE (167 aa)) constitute an N-acetyltransferase domain. Residue 552–553 (CE) coordinates substrate. Residues 618 to 620 (FYV) and 626 to 631 (GLGIGA) contribute to the acetyl-CoA site. Substrate-binding positions include 650-652 (HFL) and Glu676.

It belongs to the acetyltransferase family.

This is Spermidine/spermine N(1)-acetyltransferase-like protein 1 (SATL1) from Homo sapiens (Human).